We begin with the raw amino-acid sequence, 142 residues long: MSGSVNQNTDQHSQDSSSTPNNKLTKTLASLDDSTLEFAVDVLSHLPLIRRSLNYAKNLLVRLFVMYMIVQVSYYIVPFVLLVLFGYNQSTPDMKFAIQLQVLVVSRGIIDGIIGVLQFIFWFWIFVDLIRFLFGYAKNKVN.

Residues 1–22 (MSGSVNQNTDQHSQDSSSTPNN) form a disordered region. Helical transmembrane passes span 63–83 (LFVM…VLLV) and 109–129 (IIDG…FVDL).

The protein resides in the membrane. This is an uncharacterized protein from Acanthamoeba polyphaga mimivirus (APMV).